A 243-amino-acid polypeptide reads, in one-letter code: Zinc import ATP-binding protein ZnuC (243 aa).

The region spanning 8–225 (LNLSNVSYYI…SEFQKLFGHH (218 aa)) is the ABC transporter domain. Residue 40-47 (GPNGAGKS) participates in ATP binding.

Belongs to the ABC transporter superfamily. Zinc importer (TC 3.A.1.15.5) family. In terms of assembly, the complex is composed of two ATP-binding proteins (ZnuC), two transmembrane proteins (ZnuB) and a solute-binding protein (ZnuA).

Its subcellular location is the cell inner membrane. It carries out the reaction Zn(2+)(out) + ATP(in) + H2O(in) = Zn(2+)(in) + ADP(in) + phosphate(in) + H(+)(in). Part of the ABC transporter complex ZnuABC involved in zinc import. Responsible for energy coupling to the transport system. The polypeptide is Zinc import ATP-binding protein ZnuC (Psychrobacter cryohalolentis (strain ATCC BAA-1226 / DSM 17306 / VKM B-2378 / K5)).